Here is a 272-residue protein sequence, read N- to C-terminus: SWIRM domain-containing protein laf2 (272 aa).

Residues 86–148 (HVGRWANRHS…RRRKSARGNG (63 aa)) form a disordered region. 2 stretches are compositionally biased toward low complexity: residues 95–120 (SNVSSSSGSRGRSSVSSRDSSPSYSG) and 127–136 (RSISSSPSTI). Residues serine 130 and serine 132 each carry the phosphoserine modification. A Phosphothreonine modification is found at threonine 135. One can recognise an SWIRM domain in the interval 182-272 (LKAEWKGPPL…AFHEVGFFDD (91 aa)).

In terms of assembly, component of the RPD3C(L) complex.

It is found in the nucleus. Component of the RPD3C(L) histone deacetylase complex (HDAC) responsible for the deacetylation of lysine residues on the N-terminal part of the core histones (H2A, H2B, H3 and H4). Histone deacetylation gives a tag for epigenetic repression and plays an important role in transcriptional regulation, cell cycle progression and developmental events. The chain is SWIRM domain-containing protein laf2 (laf2) from Schizosaccharomyces pombe (strain 972 / ATCC 24843) (Fission yeast).